The chain runs to 243 residues: Calcium-binding protein LPS1-beta (243 aa).

EF-hand domains follow at residues 15 to 49 (EVIDAMKQEFKDNYDTNKDGTVSCAELAKLMDCPE), 47 to 82 (CPEEEAQRIITGVDVNCDGRMQFDEFLLYMEGYTKE), 85 to 120 (YSSDEIKQMFDDLDKDGNGRISPDELSKGVGEISTK), 121 to 156 (LVEGMANKLIQEADKDGDGHVNMEEFVDTLVAKLPL), 157 to 189 (CFKKCFHEDFDKNGDGSLTNAEMSQLLNRNLPG), 191 to 226 (YSEELINEMISRVDLNGDGRVQFGEFLMHAQNLSKD), and 227 to 243 (DIKNQFMAIDKDKNGKI). Asp29, Asn31, Asp33, Thr35, Glu40, Asp60, Asn62, Asp64, Arg66, Glu71, Asp98, Asp100, Asn102, Arg104, Glu109, Asp134, Asp136, Asp138, His140, Glu145, Asp167, Asn169, Asp171, Ser173, Glu178, Asp204, Asn206, Asp208, Arg210, and Glu215 together coordinate Ca(2+).

As to expression, aboral ectoderm, a squamous epithelium covering the surface of the late stage embryo and larva.

Calcium-binding protein involved in larval development and metamorphosis. Likely to function as calcium buffers mediating the transport of calcium from the sea water to the blastocoel where calcium is required for skeleton formation. In Lytechinus pictus (Painted sea urchin), this protein is Calcium-binding protein LPS1-beta.